Consider the following 307-residue polypeptide: Acetaldehyde dehydrogenase 1 (307 aa).

Residue cysteine 131 is the Acyl-thioester intermediate of the active site. Residues 162 to 170 (SIGPGTRKN) and asparagine 273 contribute to the NAD(+) site.

This sequence belongs to the acetaldehyde dehydrogenase family.

The catalysed reaction is acetaldehyde + NAD(+) + CoA = acetyl-CoA + NADH + H(+). The protein is Acetaldehyde dehydrogenase 1 (salG) of Metapseudomonas furukawaii (Pseudomonas furukawaii).